The following is a 291-amino-acid chain: 4-hydroxy-tetrahydrodipicolinate synthase (291 aa).

Residue Thr-45 coordinates pyruvate. Tyr-131 acts as the Proton donor/acceptor in catalysis. Catalysis depends on Lys-159, which acts as the Schiff-base intermediate with substrate. Ile-202 serves as a coordination point for pyruvate.

This sequence belongs to the DapA family. In terms of assembly, homotetramer; dimer of dimers.

The protein resides in the cytoplasm. It carries out the reaction L-aspartate 4-semialdehyde + pyruvate = (2S,4S)-4-hydroxy-2,3,4,5-tetrahydrodipicolinate + H2O + H(+). The protein operates within amino-acid biosynthesis; L-lysine biosynthesis via DAP pathway; (S)-tetrahydrodipicolinate from L-aspartate: step 3/4. Catalyzes the condensation of (S)-aspartate-beta-semialdehyde [(S)-ASA] and pyruvate to 4-hydroxy-tetrahydrodipicolinate (HTPA). This is 4-hydroxy-tetrahydrodipicolinate synthase from Methanosarcina barkeri (strain Fusaro / DSM 804).